We begin with the raw amino-acid sequence, 447 residues long: Argininosuccinate synthase (447 aa).

ATP-binding positions include 17-25 (AFSGGLDTS) and Ala43. Tyr99 contacts L-citrulline. Gly129 and Thr131 together coordinate ATP. 3 residues coordinate L-aspartate: Thr131, Asn135, and Asp136. Asn135 contacts L-citrulline. Asp136 contributes to the ATP binding site. Arg139 and Ser192 together coordinate L-citrulline. Asp194 lines the ATP pocket. Residues Thr201, Glu203, and Glu280 each contribute to the L-citrulline site.

The protein belongs to the argininosuccinate synthase family. Type 2 subfamily. In terms of assembly, homotetramer.

It is found in the cytoplasm. It catalyses the reaction L-citrulline + L-aspartate + ATP = 2-(N(omega)-L-arginino)succinate + AMP + diphosphate + H(+). It functions in the pathway amino-acid biosynthesis; L-arginine biosynthesis; L-arginine from L-ornithine and carbamoyl phosphate: step 2/3. The sequence is that of Argininosuccinate synthase (argG) from Salmonella typhi.